The chain runs to 370 residues: DNA-directed RNA polymerase II subunit GRINL1A (370 aa).

The segment at 1–20 is disordered; that stretch reads MSSLPRGFEPQTPEDLGQRS. Residues 15-69 adopt a coiled-coil conformation; that stretch reads DLGQRSLAELREMLKRQERLLRNVKFICKLPDKGKKISDAVTKLKAAIAEREEVR. An important for transcription repressor activity region spans residues 29–68; it reads KRQERLLRNVKFICKLPDKGKKISDAVTKLKAAIAEREEV. Disordered regions lie at residues 93–172, 204–226, and 241–283; these read DGDR…ASEG, DPTE…WSGP, and KNPM…RRDR. Positions 101 to 131 are enriched in polar residues; sequence NSDQILDTSSPVPGCSSVANITSSQTTSRQQ. Over residues 138 to 152 the composition is skewed to basic and acidic residues; it reads RGGDAEAAEAEHTVS. Over residues 155-170 the composition is skewed to low complexity; the sequence is PTSSSGAPAPSSSQAS. Residues 205–214 are compositionally biased toward basic and acidic residues; that stretch reads PTEHHSEGNR. The tract at residues 228–299 is interaction with Pol II; it reads KKPHYMEVLE…TAARLLPLHH (72 aa). Over residues 254 to 266 the composition is skewed to polar residues; sequence VLPSQPRDSSSAC. Ser-271 is subject to Phosphoserine. The interval 300-315 is important for transcription repressor activity; sequence LPTQLLSIEESLALQR. The stretch at 303–328 forms a coiled coil; it reads QLLSIEESLALQRQQKQSYEEIQAKL. An interaction with Pol II region spans residues 316–341; the sequence is QQKQSYEEIQAKLAAQKLAERLNIKM. Residues 340 to 370 form a disordered region; sequence KMQSYNPEGESSRKYREVRDEDDDQSSEDEF. Basic and acidic residues predominate over residues 349–358; that stretch reads ESSRKYREVR. Positions 359 to 370 are enriched in acidic residues; the sequence is DEDDDQSSEDEF.

The protein belongs to the GRINL1 family. Component of the Pol II(G) complex, which contains the RNA polymerase II (Pol II) core complex subunits and POLR2M and appears to be an abundant form of Pol II. Post-translationally, dephosphorylated at Ser-271 by the PNUTS-PP1 complex, promoting RNA polymerase II transcription pause-release.

Its subcellular location is the nucleus. In terms of biological role, appears to be a stable component of the Pol II(G) complex form of RNA polymerase II (Pol II). Pol II synthesizes mRNA precursors and many functional non-coding RNAs and is the central component of the basal RNA polymerase II transcription machinery. May play a role in Mediator complex-dependent regulation of transcription activation. Acts in vitro as a negative regulator of transcriptional activation; this repression is relieved by the Mediator complex, which restores Pol II(G) activator-dependent transcription to a level equivalent to that of Pol II. The sequence is that of DNA-directed RNA polymerase II subunit GRINL1A (POLR2M) from Bos taurus (Bovine).